The following is a 280-amino-acid chain: uncharacterized protein (280 aa).

4 CBS domains span residues 10-67, 90-146, 154-209, and 229-280; these read QNKK…GSKY, MEEN…KIDE, ITRD…DWAF, and MKRD…KYFA.

This is an uncharacterized protein from Methanocaldococcus jannaschii (strain ATCC 43067 / DSM 2661 / JAL-1 / JCM 10045 / NBRC 100440) (Methanococcus jannaschii).